Consider the following 148-residue polypeptide: Receptor activity-modifying protein 1 (148 aa).

The signal sequence occupies residues 1 to 26 (MAPGLRGLPRCGLWLLLAHHLFMVTA). 3 disulfides stabilise this stretch: C27-C82, C40-C72, and C57-C104. Topologically, residues 27 to 118 (CRDPDYGTLI…RALRDPPNSI (92 aa)) are extracellular. The chain crosses the membrane as a helical span at residues 119-140 (LCPFIALPITVTLLMTALVVWR). Residues 141-148 (SKRTEGIV) lie on the Cytoplasmic side of the membrane.

Belongs to the RAMP family. As to quaternary structure, heterodimer of CALCRL and RAMP1; the interaction induces allosteric modulation of CALCRL function and CGRP1/CALCA and CGRP2/CALCB ligand specificity. Heterodimer of CALCR and RAMP1; interaction forms the AMYR1 receptor complex for amylin/IAPP and CGRP1/CALCA ligands. Expressed predominantly in the thymus, skeletal muscle, embryonic and adult brain, embryonic and adult lung, and colon.

The protein localises to the cell membrane. Functionally, accessory protein that interacts with and modulates the function of G-protein coupled receptors including calcitonin gene-related peptide type 1 receptor (CALCRL) and calcitonin receptor (CALCR). Required for the transport of CALCRL to the plasma membrane. Together with CALCRL, form the receptor complex for the calcitonin gene-related peptides CGRP1/CALCA and CGRP2/CALCB. Together with CALCR, form the AMYR1 receptor complex for amylin/IAPP and CGRP1/CALCA. The sequence is that of Receptor activity-modifying protein 1 from Mus musculus (Mouse).